A 1002-amino-acid polypeptide reads, in one-letter code: DNA-directed RNA polymerase 1B, mitochondrial (1002 aa).

The N-terminal 21 residues, 1 to 21 (MWRYISKHAYSRKFRNSHDSA), are a transit peptide targeting the mitochondrion. Active-site residues include Asp-703, Lys-778, and Asp-935.

Belongs to the phage and mitochondrial RNA polymerase family.

The protein localises to the mitochondrion. The enzyme catalyses RNA(n) + a ribonucleoside 5'-triphosphate = RNA(n+1) + diphosphate. Functionally, DNA-dependent RNA polymerase catalyzes the transcription of DNA into RNA using the four ribonucleoside triphosphates as substrates. This Nicotiana tabacum (Common tobacco) protein is DNA-directed RNA polymerase 1B, mitochondrial (RPOT1-TOM).